The sequence spans 192 residues: Pyridoxal 5'-phosphate synthase subunit PdxT (192 aa).

46 to 48 (GES) is a binding site for L-glutamine. The Nucleophile role is filled by Cys-77. Residues Arg-103 and 131–132 (IR) contribute to the L-glutamine site. Catalysis depends on charge relay system residues His-167 and Glu-169.

This sequence belongs to the glutaminase PdxT/SNO family. In the presence of PdxS, forms a dodecamer of heterodimers. Only shows activity in the heterodimer.

The enzyme catalyses aldehydo-D-ribose 5-phosphate + D-glyceraldehyde 3-phosphate + L-glutamine = pyridoxal 5'-phosphate + L-glutamate + phosphate + 3 H2O + H(+). It carries out the reaction L-glutamine + H2O = L-glutamate + NH4(+). It functions in the pathway cofactor biosynthesis; pyridoxal 5'-phosphate biosynthesis. In terms of biological role, catalyzes the hydrolysis of glutamine to glutamate and ammonia as part of the biosynthesis of pyridoxal 5'-phosphate. The resulting ammonia molecule is channeled to the active site of PdxS. This is Pyridoxal 5'-phosphate synthase subunit PdxT from Exiguobacterium sibiricum (strain DSM 17290 / CCUG 55495 / CIP 109462 / JCM 13490 / 255-15).